A 501-amino-acid polypeptide reads, in one-letter code: Adenylosuccinate synthetase 2, chloroplastic (501 aa).

GTP is bound by residues 87-93 and 115-117; these read GDEGKGK and GHT. Asp-88 acts as the Proton acceptor in catalysis. Residues Asp-88 and Gly-115 each coordinate Mg(2+). Residues 88–91, 113–116, Thr-205, Arg-219, Gln-300, Thr-315, and Arg-379 each bind IMP; these read DEGK and NAGH. His-116 acts as the Proton donor in catalysis. 375 to 381 contacts substrate; it reads NITGRPR. Residues Arg-381, 407 to 409, and 490 to 492 contribute to the GTP site; these read KLD and GIG.

This sequence belongs to the adenylosuccinate synthetase family. In terms of assembly, homodimer. Mg(2+) is required as a cofactor.

It is found in the plastid. The protein resides in the chloroplast. The enzyme catalyses IMP + L-aspartate + GTP = N(6)-(1,2-dicarboxyethyl)-AMP + GDP + phosphate + 2 H(+). Its pathway is purine metabolism; AMP biosynthesis via de novo pathway; AMP from IMP: step 1/2. Plays an important role in the de novo pathway and in the salvage pathway of purine nucleotide biosynthesis. Catalyzes the first committed step in the biosynthesis of AMP from IMP. The chain is Adenylosuccinate synthetase 2, chloroplastic from Capsicum frutescens (Cayenne pepper).